The primary structure comprises 500 residues: Protein nucleotidyltransferase YdiU (500 aa).

Residues Gly98, Gly100, Arg101, Lys124, Asp136, Gly137, Arg187, and Arg194 each coordinate ATP. Residue Asp263 is the Proton acceptor of the active site. The Mg(2+) site is built by Asn264 and Asp273. Asp273 contributes to the ATP binding site.

The protein belongs to the SELO family. The cofactor is Mg(2+). Mn(2+) is required as a cofactor.

The enzyme catalyses L-seryl-[protein] + ATP = 3-O-(5'-adenylyl)-L-seryl-[protein] + diphosphate. It carries out the reaction L-threonyl-[protein] + ATP = 3-O-(5'-adenylyl)-L-threonyl-[protein] + diphosphate. It catalyses the reaction L-tyrosyl-[protein] + ATP = O-(5'-adenylyl)-L-tyrosyl-[protein] + diphosphate. The catalysed reaction is L-histidyl-[protein] + UTP = N(tele)-(5'-uridylyl)-L-histidyl-[protein] + diphosphate. The enzyme catalyses L-seryl-[protein] + UTP = O-(5'-uridylyl)-L-seryl-[protein] + diphosphate. It carries out the reaction L-tyrosyl-[protein] + UTP = O-(5'-uridylyl)-L-tyrosyl-[protein] + diphosphate. Nucleotidyltransferase involved in the post-translational modification of proteins. It can catalyze the addition of adenosine monophosphate (AMP) or uridine monophosphate (UMP) to a protein, resulting in modifications known as AMPylation and UMPylation. This Herminiimonas arsenicoxydans protein is Protein nucleotidyltransferase YdiU.